The sequence spans 443 residues: MSEMTPPQIVSELDKFIIGQEKAKRAVSIALRNRWRRMQLNSELRYEVTPKNILMIGPTGVGKTEIARRLAKLADSPFIKVEATKFTEVGYVGKEVDSIIRDLTDAAIKMIRIKNIKKNKVRVEEIVEEKILDVLVPTPKKNWTESEKNESLAKTIQTFRKKLREGVLDEKEIEINILSTTMGVEIMAPPGMEELTNQLQSLFQNLGGHKKSSRRLKIKDAIVLLTEEEAAKLINQEEIKKEAINAVEQNGIVFIDEIDKICRRGDSSGPDISREGVQRDLLPLVEGCTVSTKHGMVKTDHILFIASGAFQTSTPSDLIPELQGRLPIKVELQALTIDDFEKILTEPTASITAQYKALMETEGVYINFTKEGIRNIAEAAWKVNESIENIGARRLHTVLEKLMEDISFNASDNKGNTIEINSNYVEEHLDQLTSNEDLGRFIL.

ATP is bound by residues Ile18, 60-65 (GVGKTE), Asp256, Glu321, and Arg393.

This sequence belongs to the ClpX chaperone family. HslU subfamily. As to quaternary structure, a double ring-shaped homohexamer of HslV is capped on each side by a ring-shaped HslU homohexamer. The assembly of the HslU/HslV complex is dependent on binding of ATP.

The protein resides in the cytoplasm. In terms of biological role, ATPase subunit of a proteasome-like degradation complex; this subunit has chaperone activity. The binding of ATP and its subsequent hydrolysis by HslU are essential for unfolding of protein substrates subsequently hydrolyzed by HslV. HslU recognizes the N-terminal part of its protein substrates and unfolds these before they are guided to HslV for hydrolysis. This Buchnera aphidicola subsp. Acyrthosiphon pisum (strain APS) (Acyrthosiphon pisum symbiotic bacterium) protein is ATP-dependent protease ATPase subunit HslU.